A 440-amino-acid chain; its full sequence is Putative purine permease YwdJ (440 aa).

The next 13 membrane-spanning stretches (helical) occupy residues 3–23, 39–59, 67–87, 96–116, 130–150, 156–176, 188–208, 231–251, 283–303, 314–334, 341–361, 374–394, and 399–419; these read LVLG…VVPV, LIQS…LKGH, PAGL…TVFA, LQGA…FKVI, VYLL…ILGI, GVDG…FIMT, ILLA…AKPI, GLII…LASM, LLSG…AGFI, FMLG…MNTF, VGFA…FAEF, SIIG…ETAL, and PVFI…AIAA.

Belongs to the nucleobase:cation symporter-2 (NCS2) (TC 2.A.40) family.

Its subcellular location is the cell membrane. This Bacillus subtilis (strain 168) protein is Putative purine permease YwdJ (ywdJ).